Consider the following 296-residue polypeptide: Glycine--tRNA ligase alpha subunit (296 aa).

Belongs to the class-II aminoacyl-tRNA synthetase family. In terms of assembly, tetramer of two alpha and two beta subunits.

The protein resides in the cytoplasm. The enzyme catalyses tRNA(Gly) + glycine + ATP = glycyl-tRNA(Gly) + AMP + diphosphate. The sequence is that of Glycine--tRNA ligase alpha subunit from Desulfitobacterium hafniense (strain Y51).